A 362-amino-acid polypeptide reads, in one-letter code: Phospho-2-dehydro-3-deoxyheptonate aldolase (362 aa).

The protein belongs to the class-I DAHP synthase family.

It carries out the reaction D-erythrose 4-phosphate + phosphoenolpyruvate + H2O = 7-phospho-2-dehydro-3-deoxy-D-arabino-heptonate + phosphate. The protein operates within metabolic intermediate biosynthesis; chorismate biosynthesis; chorismate from D-erythrose 4-phosphate and phosphoenolpyruvate: step 1/7. Functionally, stereospecific condensation of phosphoenolpyruvate (PEP) and D-erythrose-4-phosphate (E4P) giving rise to 3-deoxy-D-arabino-heptulosonate-7-phosphate (DAHP). The sequence is that of Phospho-2-dehydro-3-deoxyheptonate aldolase (aroG) from Haemophilus influenzae (strain ATCC 51907 / DSM 11121 / KW20 / Rd).